A 183-amino-acid polypeptide reads, in one-letter code: Apo-citrate lyase phosphoribosyl-dephospho-CoA transferase (183 aa).

Belongs to the CitX family.

It carries out the reaction apo-[citrate lyase ACP] + 2'-(5''-triphospho-alpha-D-ribosyl)-3'-dephospho-CoA = holo-[citrate lyase ACP] + diphosphate. Its function is as follows. Transfers 2-(5''-triphosphoribosyl)-3'-dephosphocoenzyme-A on a serine residue to the apo-acyl carrier protein (gamma chain) of the citrate lyase to yield holo-acyl carrier protein. The chain is Apo-citrate lyase phosphoribosyl-dephospho-CoA transferase from Escherichia coli O45:K1 (strain S88 / ExPEC).